An 874-amino-acid polypeptide reads, in one-letter code: Alanine--tRNA ligase (874 aa).

Positions 562, 566, 664, and 668 each coordinate Zn(2+).

This sequence belongs to the class-II aminoacyl-tRNA synthetase family. Requires Zn(2+) as cofactor.

It localises to the cytoplasm. The enzyme catalyses tRNA(Ala) + L-alanine + ATP = L-alanyl-tRNA(Ala) + AMP + diphosphate. Catalyzes the attachment of alanine to tRNA(Ala) in a two-step reaction: alanine is first activated by ATP to form Ala-AMP and then transferred to the acceptor end of tRNA(Ala). Also edits incorrectly charged Ser-tRNA(Ala) and Gly-tRNA(Ala) via its editing domain. The polypeptide is Alanine--tRNA ligase (Shewanella oneidensis (strain ATCC 700550 / JCM 31522 / CIP 106686 / LMG 19005 / NCIMB 14063 / MR-1)).